Consider the following 211-residue polypeptide: Large ribosomal subunit protein bL25 (211 aa).

The segment at 185 to 211 (ESTTPAATEGEETEAAAAAPEPAAEDK) is disordered. The segment covering 199–211 (AAAAAPEPAAEDK) has biased composition (low complexity).

The protein belongs to the bacterial ribosomal protein bL25 family. CTC subfamily. Part of the 50S ribosomal subunit; part of the 5S rRNA/L5/L18/L25 subcomplex. Contacts the 5S rRNA. Binds to the 5S rRNA independently of L5 and L18.

In terms of biological role, this is one of the proteins that binds to the 5S RNA in the ribosome where it forms part of the central protuberance. This is Large ribosomal subunit protein bL25 from Treponema denticola (strain ATCC 35405 / DSM 14222 / CIP 103919 / JCM 8153 / KCTC 15104).